A 90-amino-acid chain; its full sequence is UPF0335 protein RPD_1405 (90 aa).

This sequence belongs to the UPF0335 family.

This is UPF0335 protein RPD_1405 from Rhodopseudomonas palustris (strain BisB5).